A 276-amino-acid chain; its full sequence is Diaminopimelate epimerase (276 aa).

Residues asparagine 13, glutamine 46, and asparagine 66 each coordinate substrate. Residue cysteine 75 is the Proton donor of the active site. Substrate-binding positions include 76–77 (GN), asparagine 159, asparagine 192, and 210–211 (ER). The active-site Proton acceptor is the cysteine 219. A substrate-binding site is contributed by 220 to 221 (GS).

The protein belongs to the diaminopimelate epimerase family. As to quaternary structure, homodimer.

Its subcellular location is the cytoplasm. It carries out the reaction (2S,6S)-2,6-diaminopimelate = meso-2,6-diaminopimelate. Its pathway is amino-acid biosynthesis; L-lysine biosynthesis via DAP pathway; DL-2,6-diaminopimelate from LL-2,6-diaminopimelate: step 1/1. Its function is as follows. Catalyzes the stereoinversion of LL-2,6-diaminopimelate (L,L-DAP) to meso-diaminopimelate (meso-DAP), a precursor of L-lysine and an essential component of the bacterial peptidoglycan. In Vibrio atlanticus (strain LGP32) (Vibrio splendidus (strain Mel32)), this protein is Diaminopimelate epimerase.